The following is a 123-amino-acid chain: Holo-[acyl-carrier-protein] synthase (123 aa).

Mg(2+)-binding residues include Asp-8 and Glu-60.

The protein belongs to the P-Pant transferase superfamily. AcpS family. Mg(2+) is required as a cofactor.

It is found in the cytoplasm. The catalysed reaction is apo-[ACP] + CoA = holo-[ACP] + adenosine 3',5'-bisphosphate + H(+). Its function is as follows. Transfers the 4'-phosphopantetheine moiety from coenzyme A to a Ser of acyl-carrier-protein. In Ehrlichia chaffeensis (strain ATCC CRL-10679 / Arkansas), this protein is Holo-[acyl-carrier-protein] synthase.